The primary structure comprises 95 residues: uncharacterized protein (95 aa).

This is an uncharacterized protein from Escherichia coli (strain K12).